We begin with the raw amino-acid sequence, 149 residues long: Large ribosomal subunit protein bL9 (149 aa).

The protein belongs to the bacterial ribosomal protein bL9 family.

In terms of biological role, binds to the 23S rRNA. The polypeptide is Large ribosomal subunit protein bL9 (Legionella pneumophila (strain Paris)).